We begin with the raw amino-acid sequence, 114 residues long: Large ribosomal subunit protein uL22 (114 aa).

The protein belongs to the universal ribosomal protein uL22 family. As to quaternary structure, part of the 50S ribosomal subunit.

Its function is as follows. This protein binds specifically to 23S rRNA; its binding is stimulated by other ribosomal proteins, e.g. L4, L17, and L20. It is important during the early stages of 50S assembly. It makes multiple contacts with different domains of the 23S rRNA in the assembled 50S subunit and ribosome. The globular domain of the protein is located near the polypeptide exit tunnel on the outside of the subunit, while an extended beta-hairpin is found that lines the wall of the exit tunnel in the center of the 70S ribosome. The protein is Large ribosomal subunit protein uL22 of Streptococcus uberis (strain ATCC BAA-854 / 0140J).